A 1006-amino-acid chain; its full sequence is uncharacterized protein (1006 aa).

Positions 326 to 371 (EMEKKRPRSPELVPKKIVMEKERPSSPDSEAEEREHNLRIEKERHQ) are disordered. 2 stretches are compositionally biased toward basic and acidic residues: residues 338–350 (VPKKIVMEKERPS) and 358–371 (EREHNLRIEKERHQ). 2 coiled-coil regions span residues 358–473 (EREH…ARLA) and 756–782 (EVQKQRAVDSLNSQYEKERNELDAFGR).

This is an uncharacterized protein from Caenorhabditis elegans.